A 538-amino-acid chain; its full sequence is Putative cysteine ligase BshC (538 aa).

Residues 460 to 483 (KINEQIELLEKMLKRNVEKKHEVQ) are a coiled coil.

It belongs to the BshC family.

Functionally, involved in bacillithiol (BSH) biosynthesis. May catalyze the last step of the pathway, the addition of cysteine to glucosamine malate (GlcN-Mal) to generate BSH. This is Putative cysteine ligase BshC from Bacillus mycoides (strain KBAB4) (Bacillus weihenstephanensis).